We begin with the raw amino-acid sequence, 180 residues long: ATP-dependent protease subunit HslV (180 aa).

Thr2 is a catalytic residue. Na(+) contacts are provided by Gly157, Cys160, and Ser163.

Belongs to the peptidase T1B family. HslV subfamily. As to quaternary structure, a double ring-shaped homohexamer of HslV is capped on each side by a ring-shaped HslU homohexamer. The assembly of the HslU/HslV complex is dependent on binding of ATP.

It localises to the cytoplasm. It catalyses the reaction ATP-dependent cleavage of peptide bonds with broad specificity.. With respect to regulation, allosterically activated by HslU binding. In terms of biological role, protease subunit of a proteasome-like degradation complex believed to be a general protein degrading machinery. The sequence is that of ATP-dependent protease subunit HslV from Wigglesworthia glossinidia brevipalpis.